Consider the following 55-residue polypeptide: Photosystem II reaction center protein K (55 aa).

The propeptide occupies 1-18 (MFNIYLENAFYLNGITFA). Residues 26–46 (IFDPIVDVMPIIPLFFFLLAF) form a helical membrane-spanning segment.

This sequence belongs to the PsbK family. In terms of assembly, PSII is composed of 1 copy each of membrane proteins PsbA, PsbB, PsbC, PsbD, PsbE, PsbF, PsbH, PsbI, PsbJ, PsbK, PsbL, PsbM, PsbT, PsbX, PsbY, PsbZ, Psb30/Ycf12, at least 3 peripheral proteins of the oxygen-evolving complex and a large number of cofactors. It forms dimeric complexes.

It is found in the plastid. It localises to the chloroplast thylakoid membrane. Functionally, one of the components of the core complex of photosystem II (PSII). PSII is a light-driven water:plastoquinone oxidoreductase that uses light energy to abstract electrons from H(2)O, generating O(2) and a proton gradient subsequently used for ATP formation. It consists of a core antenna complex that captures photons, and an electron transfer chain that converts photonic excitation into a charge separation. The protein is Photosystem II reaction center protein K of Marchantia polymorpha (Common liverwort).